Here is an 80-residue protein sequence, read N- to C-terminus: RNA-binding protein Hfq (80 aa).

The 60-residue stretch at 9-68 (EPFLNALRKERIPVSIYLVNGIKLQGQIDSFDQFVVLLKNTVSQMVYKHAISTIVPSRPV) folds into the Sm domain.

Belongs to the Hfq family. As to quaternary structure, homohexamer.

Its function is as follows. RNA chaperone that binds small regulatory RNA (sRNAs) and mRNAs to facilitate mRNA translational regulation in response to envelope stress, environmental stress and changes in metabolite concentrations. Also binds with high specificity to tRNAs. The sequence is that of RNA-binding protein Hfq from Thioalkalivibrio sulfidiphilus (strain HL-EbGR7).